The sequence spans 513 residues: NADH-quinone oxidoreductase chain 13 (513 aa).

14 helical membrane-spanning segments follow: residues 3–23, 34–54, 81–101, 112–132, 133–153, 164–184, 211–231, 250–270, 277–297, 312–332, 340–360, 383–403, 418–438, and 463–483; these read NLLS…ALFL, AKWL…FVLF, VDGI…LTIL, EYMI…TALD, LVLF…IIGI, FKFF…MIAM, MTVV…SFAV, PTAG…YGFL, FPVA…IAIV, VIAY…FAAN, IFQM…VGVI, AAVF…SGFV, WVAL…LWLY, and WVFI…RLVT.

This sequence belongs to the complex I subunit 4 family. As to quaternary structure, NDH-1 is composed of at least 14 different subunits, Nqo1 to Nqo14. The complex has a L-shaped structure, with the hydrophobic arm (subunits Nqo7, Nqo8, Nqo10 to Nqo14) embedded in the inner membrane and the hydrophilic peripheral arm (subunits Nqo1 to Nqo6, Nqo9) protruding into the bacterial cytoplasm. The hydrophilic domain contains all the redox centers.

Its subcellular location is the cell inner membrane. The enzyme catalyses a quinone + NADH + 5 H(+)(in) = a quinol + NAD(+) + 4 H(+)(out). Its function is as follows. NDH-1 shuttles electrons from NADH, via FMN and iron-sulfur (Fe-S) centers, to quinones in the respiratory chain. The immediate electron acceptor for the enzyme in this species is believed to be ubiquinone. Couples the redox reaction to proton translocation (for every two electrons transferred, four hydrogen ions are translocated across the cytoplasmic membrane), and thus conserves the redox energy in a proton gradient. The sequence is that of NADH-quinone oxidoreductase chain 13 from Paracoccus denitrificans.